A 269-amino-acid polypeptide reads, in one-letter code: uncharacterized protein (269 aa).

ATP is bound at residue 103 to 110 (GIFTMGKS).

This is an uncharacterized protein from Mycoplasma pneumoniae (strain ATCC 29342 / M129 / Subtype 1) (Mycoplasmoides pneumoniae).